The sequence spans 250 residues: Lymphotoxin-beta (250 aa).

Topologically, residues 1–26 are cytoplasmic; the sequence is MGAPGLETRAGGPNGKSYLLLASVGA. A helical; Signal-anchor for type II membrane protein membrane pass occupies residues 27-47; that stretch reads AVLGTLLLSVPITVLTVLALM. Residues 48–250 are Extracellular-facing; that stretch reads PQEQGGQVAD…KTFFGAVMVG (203 aa). The 163-residue stretch at 87 to 249 folds into the THD domain; the sequence is PAAHLIGIAK…GKTFFGAVMV (163 aa). N-linked (GlcNAc...) asparagine glycosylation occurs at N228.

It belongs to the tumor necrosis factor family. As to quaternary structure, heterotrimer of either two LTB and one LTA subunits or (less prevalent) two LTA and one LTB subunits.

The protein localises to the membrane. Cytokine that binds to LTBR/TNFRSF3. May play a specific role in immune response regulation. Provides the membrane anchor for the attachment of the heterotrimeric complex to the cell surface. The chain is Lymphotoxin-beta (LTB) from Notamacropus eugenii (Tammar wallaby).